The chain runs to 138 residues: Holo-[acyl-carrier-protein] synthase (138 aa).

Mg(2+)-binding residues include aspartate 11 and glutamate 65.

It belongs to the P-Pant transferase superfamily. AcpS family. The cofactor is Mg(2+).

Its subcellular location is the cytoplasm. The catalysed reaction is apo-[ACP] + CoA = holo-[ACP] + adenosine 3',5'-bisphosphate + H(+). Transfers the 4'-phosphopantetheine moiety from coenzyme A to a Ser of acyl-carrier-protein. This is Holo-[acyl-carrier-protein] synthase from Ralstonia nicotianae (strain ATCC BAA-1114 / GMI1000) (Ralstonia solanacearum).